A 512-amino-acid chain; its full sequence is Bifunctional pantoate ligase/cytidylate kinase (512 aa).

Positions 1 to 276 (MKLQTSADLQ…CGEARLIDHR (276 aa)) are pantoate--beta-alanine ligase. Residue 27 to 34 (MGALHQGH) coordinates ATP. Catalysis depends on H34, which acts as the Proton donor. A (R)-pantoate-binding site is contributed by Q58. Residue Q58 participates in beta-alanine binding. 147–150 (GEKD) is a binding site for ATP. Q153 lines the (R)-pantoate pocket. ATP contacts are provided by residues L176 and 184–187 (LSSR). Positions 277–512 (VLMSRLPILA…VPVEALNADA (236 aa)) are cytidylate kinase.

It in the N-terminal section; belongs to the pantothenate synthetase family. This sequence in the C-terminal section; belongs to the cytidylate kinase family. Type 1 subfamily.

Its subcellular location is the cytoplasm. The enzyme catalyses (R)-pantoate + beta-alanine + ATP = (R)-pantothenate + AMP + diphosphate + H(+). The catalysed reaction is CMP + ATP = CDP + ADP. It carries out the reaction dCMP + ATP = dCDP + ADP. Its pathway is cofactor biosynthesis; (R)-pantothenate biosynthesis; (R)-pantothenate from (R)-pantoate and beta-alanine: step 1/1. Functionally, catalyzes the condensation of pantoate with beta-alanine in an ATP-dependent reaction via a pantoyl-adenylate intermediate. In terms of biological role, catalyzes the transfer of a phosphate group from ATP to either CMP or dCMP to form CDP or dCDP and ADP, respectively. The chain is Bifunctional pantoate ligase/cytidylate kinase from Synechococcus sp. (strain RCC307).